The primary structure comprises 463 residues: Cytoplasmic tRNA 2-thiolation protein 2 (463 aa).

It belongs to the CTU2/NCS2 family.

The protein localises to the cytoplasm. The protein operates within tRNA modification; 5-methoxycarbonylmethyl-2-thiouridine-tRNA biosynthesis. Functionally, plays a central role in 2-thiolation of mcm(5)S(2)U at tRNA wobble positions of tRNA(Lys), tRNA(Glu) and tRNA(Gln). May act by forming a heterodimer with NCS6 that ligates sulfur from thiocarboxylated URM1 onto the uridine of tRNAs at wobble position. Prior mcm(5) tRNA modification by the elongator complex is required for 2-thiolation. May also be involved in protein urmylation. This is Cytoplasmic tRNA 2-thiolation protein 2 from Kluyveromyces lactis (strain ATCC 8585 / CBS 2359 / DSM 70799 / NBRC 1267 / NRRL Y-1140 / WM37) (Yeast).